A 140-amino-acid chain; its full sequence is Odorant-binding protein 10 (140 aa).

Positions M1 to S25 are cleaved as a signal peptide.

This sequence belongs to the PBP/GOBP family. High-level expression in female mouth parts, particularly in the proboscis (at protein level). Low-level expression in female antenna (at protein level). Female salivary gland. Female chemosensory organs: antenna, palp and proboscis. Male antenna, wing and maxillary palp. Expressed at higher levels in male tissues compared to female tissues. Not detected in midgut.

Its subcellular location is the secreted. Its function is as follows. Involved in modulation of blood-feeding behavior and capacity in female mosquitoes. Required for normal oviposition. Required for normal fecundity and fertility of female mosquitoes. Required for normal expression of VGA1 gene, which encodes the egg yolk protein vitellogenin-A1. Required for normal female longevity when mosquitoes are maintained on regular sugar meal. In terms of biological role, (Microbial infection) Facilitates shedding of dengue virus type 2 particles into mosquito saliva. Does not affect dengue virus type 2 replication or infection prevalence in midgut and salivary glands at 14 days after blood feeding. (Microbial infection) Facilitates shedding of Zika virus particles into mosquito saliva. Does not affect Zika virus replication or infection prevalence in midgut and salivary glands at 14 days after blood feeding. The chain is Odorant-binding protein 10 from Aedes aegypti (Yellowfever mosquito).